The chain runs to 908 residues: Protein translocase subunit SecA (908 aa).

ATP contacts are provided by residues Gln87, 105 to 109 (GEGKT), and Asp494. The segment at 871-908 (QEFSGGNLNRSQSNGSSVTVTTSSGGGTERKTSRRRKR) is disordered. A compositionally biased stretch (polar residues) spans 874–884 (SGGNLNRSQSN).

It belongs to the SecA family. Monomer and homodimer. Part of the essential Sec protein translocation apparatus which comprises SecA, SecYEG and auxiliary proteins SecDF. Other proteins may also be involved.

It is found in the cell inner membrane. Its subcellular location is the cytoplasm. It carries out the reaction ATP + H2O + cellular proteinSide 1 = ADP + phosphate + cellular proteinSide 2.. Functionally, part of the Sec protein translocase complex. Interacts with the SecYEG preprotein conducting channel. Has a central role in coupling the hydrolysis of ATP to the transfer of proteins into and across the cell membrane, serving as an ATP-driven molecular motor driving the stepwise translocation of polypeptide chains across the membrane. This is Protein translocase subunit SecA from Leptospira interrogans serogroup Icterohaemorrhagiae serovar Lai (strain 56601).